The primary structure comprises 290 residues: Type II secretion system protein C (290 aa).

Residues M1–P28 are Cytoplasmic-facing. Residues L29–W46 traverse the membrane as a helical segment. At R47 to E290 the chain is on the periplasmic side.

This sequence belongs to the GSP C family.

The protein resides in the cell inner membrane. Functionally, involved in a type II secretion system (T2SS, formerly general secretion pathway, GSP) for the export of proteins. This chain is Type II secretion system protein C (exeC), found in Aeromonas hydrophila.